The primary structure comprises 324 residues: Ribose-phosphate pyrophosphokinase 1 (324 aa).

Residues 39 to 41 (DGE) and 98 to 99 (RQ) contribute to the ATP site. Mg(2+)-binding residues include H132 and D174. Residue K197 is part of the active site. Residues R199, D223, and 227–231 (DTAGT) contribute to the D-ribose 5-phosphate site.

It belongs to the ribose-phosphate pyrophosphokinase family. Class I subfamily. Homohexamer. Mg(2+) serves as cofactor.

It localises to the cytoplasm. The enzyme catalyses D-ribose 5-phosphate + ATP = 5-phospho-alpha-D-ribose 1-diphosphate + AMP + H(+). It functions in the pathway metabolic intermediate biosynthesis; 5-phospho-alpha-D-ribose 1-diphosphate biosynthesis; 5-phospho-alpha-D-ribose 1-diphosphate from D-ribose 5-phosphate (route I): step 1/1. Functionally, involved in the biosynthesis of the central metabolite phospho-alpha-D-ribosyl-1-pyrophosphate (PRPP) via the transfer of pyrophosphoryl group from ATP to 1-hydroxyl of ribose-5-phosphate (Rib-5-P). This chain is Ribose-phosphate pyrophosphokinase 1, found in Lactococcus lactis subsp. lactis (strain IL1403) (Streptococcus lactis).